A 520-amino-acid polypeptide reads, in one-letter code: Maturase K (520 aa).

This sequence belongs to the intron maturase 2 family. MatK subfamily.

The protein localises to the plastid. The protein resides in the chloroplast. Usually encoded in the trnK tRNA gene intron. Probably assists in splicing its own and other chloroplast group II introns. The polypeptide is Maturase K (Ruscus aculeatus (Butcher's broom)).